A 196-amino-acid polypeptide reads, in one-letter code: Probable GTP-binding protein EngB (196 aa).

The EngB-type G domain maps to 22–196 (NLPEIALSGR…GNWIEEKISK (175 aa)). GTP-binding positions include 30 to 37 (GRSNVGKS), 57 to 61 (GKTQT), 75 to 78 (DVPG), 142 to 145 (TKID), and 175 to 177 (FSS). The Mg(2+) site is built by Ser37 and Thr59.

Belongs to the TRAFAC class TrmE-Era-EngA-EngB-Septin-like GTPase superfamily. EngB GTPase family. The cofactor is Mg(2+).

In terms of biological role, necessary for normal cell division and for the maintenance of normal septation. In Lactobacillus helveticus (strain DPC 4571), this protein is Probable GTP-binding protein EngB.